The chain runs to 334 residues: tRNA N6-adenosine threonylcarbamoyltransferase (334 aa).

Positions 112 and 116 each coordinate Fe cation. Substrate is bound by residues valine 135–glycine 139, aspartate 168, glycine 181, aspartate 185, and asparagine 274. Position 303 (aspartate 303) interacts with Fe cation.

Belongs to the KAE1 / TsaD family. Requires Fe(2+) as cofactor.

The protein resides in the cytoplasm. It catalyses the reaction L-threonylcarbamoyladenylate + adenosine(37) in tRNA = N(6)-L-threonylcarbamoyladenosine(37) in tRNA + AMP + H(+). Functionally, required for the formation of a threonylcarbamoyl group on adenosine at position 37 (t(6)A37) in tRNAs that read codons beginning with adenine. Is involved in the transfer of the threonylcarbamoyl moiety of threonylcarbamoyl-AMP (TC-AMP) to the N6 group of A37, together with TsaE and TsaB. TsaD likely plays a direct catalytic role in this reaction. The sequence is that of tRNA N6-adenosine threonylcarbamoyltransferase from Anaeromyxobacter dehalogenans (strain 2CP-C).